The following is a 138-amino-acid chain: ATP synthase epsilon chain (138 aa).

It belongs to the ATPase epsilon chain family. F-type ATPases have 2 components, CF(1) - the catalytic core - and CF(0) - the membrane proton channel. CF(1) has five subunits: alpha(3), beta(3), gamma(1), delta(1), epsilon(1). CF(0) has three main subunits: a, b and c.

The protein localises to the cell inner membrane. In terms of biological role, produces ATP from ADP in the presence of a proton gradient across the membrane. The chain is ATP synthase epsilon chain from Bartonella quintana (strain Toulouse) (Rochalimaea quintana).